The chain runs to 2907 residues: Fibrillin-2 (2907 aa).

An N-terminal signal peptide occupies residues 1–28 (MGRRRRLCLQPYFVWLGCVALWAQGTDG). The disordered stretch occupies residues 26-58 (TDGQPQPPPPKTLRPQPPPQQVRPAVAGSEGGF). Positions 29 to 77 (QPQPPPPKTLRPQPPPQQVRPAVAGSEGGFMGPEYRDEGAVAASRVRRR) are excised as a propeptide. The span at 30 to 46 (PQPPPPKTLRPQPPPQQ) shows a compositional bias: pro residues. 3 consecutive EGF-like domains span residues 111–142 (IVPI…PTCG), 145–176 (SIQQ…TYCG), and 176–208 (GQPV…PQCE). Intrachain disulfides connect Cys115-Cys124, Cys119-Cys130, Cys132-Cys141, Cys149-Cys159, Cys153-Cys164, Cys166-Cys175, Cys180-Cys190, Cys184-Cys196, and Cys198-Cys207. The interaction with MFAP4 stretch occupies residues 149–359 (CSVRCMNGGT…VTSTDGSRCI (211 aa)). Residues 214-266 (GPCFTQVNNQMCQGQLTGIVCTKTLCCATIGRAWGHPCEMCPAQPQPCRRGFI) enclose the TB 1 domain. Positions 276 to 317 (DVDECQAIPGLCQGGNCINTVGSFECRCPAGHKQSETTQKCE) constitute an EGF-like 4; calcium-binding domain. 6 disulfide bridges follow: Cys280–Cys292, Cys287–Cys301, Cys303–Cys316, Cys322–Cys334, Cys329–Cys343, and Cys345–Cys358. Ser298 is a glycosylation site (O-linked (Glc) serine). The EGF-like 5; calcium-binding domain maps to 318–359 (DIDECSVIPGVCETGDCSNTVGSYFCLCPRGFVTSTDGSRCI). Ser340 carries O-linked (Glc) serine glycosylation. The region spanning 364–417 (GTCFSGLVNGRCAQELPGRMAKAQCCCEPGRCWSIGTIPEACPVRGSEEYRRLC) is the TB 2 domain. N-linked (GlcNAc...) asparagine glycosylation is present at Asn485. The 41-residue stretch at 487-527 (TIDICKHHANLCLNGRCIPTVSSYRCECNMGYKQDANGDCI) folds into the EGF-like 6 domain. 15 disulfide bridges follow: Cys491/Cys503, Cys498/Cys512, Cys514/Cys526, Cys532/Cys542, Cys537/Cys551, Cys553/Cys566, Cys572/Cys584, Cys579/Cys593, Cys595/Cys608, Cys614/Cys625, Cys620/Cys634, Cys636/Cys649, Cys655/Cys666, Cys661/Cys675, and Cys677/Cys690. Ser509 carries O-linked (Glc) serine glycosylation. The EGF-like 7; calcium-binding domain maps to 528–567 (DVDECTSNPCSNGDCVNTPGSYYCKCHAGFQRTPTKQACI). The O-linked (Glc) serine glycan is linked to Ser548. In terms of domain architecture, EGF-like 8; calcium-binding spans 568-609 (DIDECIQNGVLCKNGRCVNTDGSFQCICNAGFELTTDGKNCV). Ser590 carries an O-linked (Glc) serine glycan. Residues 610–650 (DHDECTTTNMCLNGMCINEDGSFKCVCKPGFILAPNGRYCT) form the EGF-like 9; calcium-binding domain. A glycan (O-linked (Glc) serine) is linked at Ser631. The EGF-like 10; calcium-binding domain occupies 651 to 691 (DVDECQTPGICMNGHCINNEGSFRCDCPPGLAVGVDGRVCV). Residue Ser672 is glycosylated (O-linked (Glc) serine). Residues 697-749 (STCYGEIKKGVCVRPFPGAVTKSECCCANPDYGFGEPCQPCPAKNSAEFHGLC) enclose the TB 3 domain. The 42-residue stretch at 761–802 (DINECALDPDICANGICENLRGSYRCNCNSGYEPDASGRNCI) folds into the EGF-like 11; calcium-binding domain. 9 cysteine pairs are disulfide-bonded: Cys765/Cys777, Cys772/Cys786, Cys788/Cys801, Cys807/Cys819, Cys814/Cys828, Cys830/Cys843, Cys849/Cys859, Cys854/Cys868, and Cys870/Cys883. Residues 803 to 844 (DIDECLVNRLLCDNGLCRNTPGSYSCTCPPGYVFRTETETCE) form the EGF-like 12; calcium-binding domain. Ser825 carries O-linked (Glc) serine glycosylation. One can recognise an EGF-like 13; calcium-binding domain in the interval 845–883 (DVNECESNPCVNGACRNNLGSFHCECSPGSKLSSTGLIC). Residue Ser865 is glycosylated (O-linked (Glc) serine). In terms of domain architecture, TB 4 spans 889–940 (GTCWLNIQDNRCEVNINGATLKSECCATLGAAWGSPCERCELDAACPRGFAR). Positions 948 to 989 (DVNECEVFPGVCPNGRCVNSKGSFHCECPEGLTLDGTGRVCL) constitute an EGF-like 14; calcium-binding domain. 3 disulfide bridges follow: Cys952–Cys964, Cys959–Cys973, and Cys975–Cys988. A glycan (O-linked (Glc) serine) is linked at Ser970. The 52-residue stretch at 994-1045 (EHCFLKWDEDECIHPVPGKFRMDACCCAVGAAWGTECEECPKPGTKEYETLC) folds into the TB 5 domain. The 42-residue stretch at 1066-1107 (DINECKAFPGMCTYGKCRNTIGSFKCRCNNGFALDMEERNCT) folds into the EGF-like 15; calcium-binding domain. Disulfide bonds link Cys1070–Cys1082, Cys1077–Cys1091, Cys1093–Cys1106, Cys1112–Cys1124, Cys1119–Cys1133, Cys1135–Cys1149, Cys1155–Cys1167, Cys1162–Cys1176, Cys1178–Cys1191, Cys1197–Cys1209, Cys1204–Cys1218, Cys1220–Cys1233, Cys1239–Cys1250, Cys1246–Cys1259, Cys1261–Cys1274, Cys1280–Cys1292, Cys1287–Cys1301, Cys1303–Cys1316, Cys1322–Cys1334, Cys1329–Cys1343, Cys1345–Cys1358, Cys1364–Cys1377, Cys1371–Cys1386, Cys1388–Cys1399, Cys1405–Cys1418, Cys1412–Cys1427, Cys1429–Cys1440, Cys1446–Cys1458, Cys1453–Cys1467, Cys1469–Cys1482, Cys1488–Cys1499, Cys1494–Cys1508, Cys1510–Cys1523, Cys1529–Cys1540, Cys1535–Cys1549, and Cys1551–Cys1564. The O-linked (Glc) serine glycan is linked to Ser1088. A glycan (N-linked (GlcNAc...) asparagine) is linked at Asn1105. The EGF-like 16; calcium-binding domain maps to 1108–1150 (DIDECRISPDLCGSGICVNTPGSFECECFEGYESGFMMMKNCM). The region spanning 1151 to 1192 (DIDECERNPLLCRGGTCVNTEGSFQCDCPLGHELSPSREDCV) is the EGF-like 17; calcium-binding domain. Residue Ser1173 is glycosylated (O-linked (Glc) serine). The region spanning 1193–1234 (DINECSLSDNLCRNGKCVNMIGTYQCSCNPGYQATPDRQGCT) is the EGF-like 18; calcium-binding domain. An O-linked (Glc) threonine glycan is attached at Thr1215. Positions 1235-1275 (DIDECMIMNGGCDTQCTNSEGSYECSCSEGYALMPDGRSCA) constitute an EGF-like 19; calcium-binding domain. A glycan (O-linked (Glc) serine) is linked at Ser1256. In terms of domain architecture, EGF-like 20; calcium-binding spans 1276–1317 (DIDECENNPDICDGGQCTNIPGEYRCLCYDGFMASMDMKTCI). Residues 1318–1359 (DVNECDLNPNICMFGECENTKGSFICHCQLGYSVKKGTTGCT) enclose the EGF-like 21; calcium-binding domain. A glycan (O-linked (Glc) serine) is linked at Ser1340. The EGF-like 22; calcium-binding domain occupies 1360–1400 (DVDECEIGAHNCDMHASCLNVPGSFKCSCREGWVGNGIKCI). Ser1383 carries O-linked (Glc) serine glycosylation. Residues 1401 to 1441 (DLDECANGTHQCSINAQCVNTPGSYRCACSEGFTGDGFTCS) enclose the EGF-like 23; calcium-binding domain. An N-linked (GlcNAc...) asparagine glycan is attached at Asn1407. One can recognise an EGF-like 24; calcium-binding domain in the interval 1442-1483 (DVDECAENTNLCENGQCLNVPGAYRCECEMGFTPASDSRSCQ). Residues 1484-1524 (DIDECSFQNICVFGTCNNLPGMFHCICDDGYELDRTGGNCT) form the EGF-like 25; calcium-binding domain. An N-linked (GlcNAc...) asparagine glycan is attached at Asn1522. Residues 1525–1565 (DIDECADPINCVNGLCVNTPGRYECNCPPDFQLNPTGVGCV) enclose the EGF-like 26; calcium-binding domain. The region spanning 1570 to 1626 (GNCYLKFGPRGDGSLSCNTEVGVGVSRSSCCCSLGKAWGNPCETCPPVNSTEYYTLC) is the TB 6 domain. Asn1618 carries an N-linked (GlcNAc...) asparagine glycan. The EGF-like 27; calcium-binding domain occupies 1643–1684 (DIDECQELPGLCQGGNCINTFGSFQCECPQGYYLSEETRICE). Cystine bridges form between Cys1647–Cys1659, Cys1654–Cys1668, Cys1670–Cys1683, Cys1689–Cys1701, Cys1696–Cys1710, and Cys1712–Cys1725. O-linked (Glc) serine glycosylation occurs at Ser1665. The region spanning 1685 to 1726 (DIDECFAHPGVCGPGTCYNTLGNYTCICPPEYMQVNGGHNCM) is the EGF-like 28; calcium-binding domain. Asn1707 carries N-linked (GlcNAc...) asparagine glycosylation. Residues 1728–2164 (MRKSFCYRSY…VPSLHDTRED (437 aa)) are interaction with MFAP4. One can recognise a TB 7 domain in the interval 1731-1784 (SFCYRSYNGTTCENELPFNVTKRMCCCTYNVGKAWNKPCEPCPTPGTADFKTIC). Asn1738 and Asn1749 each carry an N-linked (GlcNAc...) asparagine glycan. An EGF-like 29; calcium-binding domain is found at 1801 to 1842 (DIDECKEIPGICANGVCINQIGSFRCECPTGFSYNDLLLVCE). 21 cysteine pairs are disulfide-bonded: Cys1805–Cys1817, Cys1812–Cys1826, Cys1828–Cys1841, Cys1847–Cys1860, Cys1854–Cys1869, Cys1871–Cys1883, Cys1889–Cys1901, Cys1896–Cys1910, Cys1912–Cys1925, Cys1931–Cys1941, Cys1936–Cys1950, Cys1952–Cys1964, Cys1970–Cys1983, Cys1978–Cys1992, Cys1994–Cys2007, Cys2013–Cys2025, Cys2020–Cys2034, Cys2036–Cys2047, Cys2053–Cys2065, Cys2060–Cys2074, and Cys2076–Cys2089. Positions 1843-1884 (DIDECSNGDNLCQRNADCINSPGSYRCECAAGFKLSPNGACV) constitute an EGF-like 30; calcium-binding domain. Ser1866 is a glycosylation site (O-linked (Glc) serine). The 42-residue stretch at 1885 to 1926 (DRNECLEIPNVCSHGLCVDLQGSYQCICNNGFKASQDQTMCM) folds into the EGF-like 31; calcium-binding domain. The EGF-like 32; calcium-binding domain occupies 1927 to 1965 (DVDECERHPCGNGTCKNTVGSYNCLCYPGFELTHNNDCL). N-linked (GlcNAc...) asparagine glycosylation is present at Asn1938. Residue Ser1947 is glycosylated (O-linked (Glc) serine). An EGF-like 33; calcium-binding domain is found at 1966–2008 (DIDECSSFFGQVCRNGRCFNEIGSFKCLCNEGYELTPDGKNCI). O-linked (Glc) serine glycosylation occurs at Ser1989. The EGF-like 34; calcium-binding domain maps to 2009 to 2048 (DTNECVALPGSCSPGTCQNLEGSFRCICPPGYEVRSENCI). An EGF-like 35; calcium-binding domain is found at 2049–2090 (DINECDEDPNICLFGSCTNTPGGFQCICPPGFVLSDNGRRCF). The 54-residue stretch at 2095 to 2148 (SFCFTNFENGKCSVPKAFNTTKAKCCCSKMPGEGWGDPCELCPKDDEVAFQDLC) folds into the TB 8 domain. Asn2113 carries N-linked (GlcNAc...) asparagine glycosylation. The region spanning 2164-2205 (DVNECLESPGICSNGQCINTDGSFRCECPMGYNLDYTGVRCV) is the EGF-like 36; calcium-binding domain. 15 disulfide bridges follow: Cys2168/Cys2180, Cys2175/Cys2189, Cys2191/Cys2204, Cys2210/Cys2221, Cys2216/Cys2230, Cys2232/Cys2244, Cys2250/Cys2261, Cys2257/Cys2270, Cys2272/Cys2285, Cys2291/Cys2305, Cys2298/Cys2314, Cys2316/Cys2329, Cys2335/Cys2347, Cys2342/Cys2356, and Cys2358/Cys2371. Ser2186 carries O-linked (Glc) serine glycosylation. The EGF-like 37; calcium-binding domain maps to 2206–2245 (DTDECSIGNPCGNGTCTNVIGSFECTCNEGFEPGPMMNCE). N-linked (GlcNAc...) asparagine glycosylation occurs at Asn2218. The EGF-like 38; calcium-binding domain maps to 2246–2286 (DINECAQNPLLCAFRCMNTFGSYECTCPVGYALREDQKMCK). Residue Ser2267 is glycosylated (O-linked (Glc) serine). Residues 2287-2330 (DLDECAEGLHDCESRGMMCKNLIGTFMCICPPGMARRPDGEGCV) enclose the EGF-like 39; calcium-binding domain. One can recognise an EGF-like 40; calcium-binding domain in the interval 2331–2372 (DENECRTKPGICENGRCVNIIGSYRCECNEGFQSSSSGTECL). A glycan (O-linked (Glc) serine) is linked at Ser2353. The TB 9 domain maps to 2377–2430 (GLCFAEVLQTMCQMASSSRNLVTKSECCCDGGRGWGHQCELCPLPGTAQYKKIC). The 42-residue stretch at 2442–2483 (DIDECKVMPSLCTNGQCVNTMGSFRCFCKVGYTTDISGTACV) folds into the EGF-like 41; calcium-binding domain. 21 disulfide bridges follow: Cys2446–Cys2458, Cys2453–Cys2467, Cys2469–Cys2482, Cys2488–Cys2499, Cys2495–Cys2508, Cys2510–Cys2523, Cys2529–Cys2540, Cys2536–Cys2549, Cys2551–Cys2562, Cys2568–Cys2581, Cys2575–Cys2590, Cys2592–Cys2605, Cys2611–Cys2621, Cys2617–Cys2630, Cys2632–Cys2645, Cys2651–Cys2662, Cys2657–Cys2671, Cys2673–Cys2686, Cys2692–Cys2703, Cys2699–Cys2712, and Cys2714–Cys2726. An O-linked (Glc) serine glycan is attached at Ser2464. An EGF-like 42; calcium-binding domain is found at 2484 to 2524 (DLDECSQSPKPCNFICKNTKGSYQCSCPRGYVLQEDGKTCK). A glycan (O-linked (Glc) serine) is linked at Ser2505. In terms of domain architecture, EGF-like 43; calcium-binding spans 2525–2563 (DLDECQTKQHNCQFLCVNTLGGFTCKCPPGFTQHHTACI). The EGF-like 44; calcium-binding domain occupies 2564-2606 (DNNECGSQPSLCGAKGICQNTPGSFSCECQRGFSLDASGLNCE). Ser2587 is a glycosylation site (O-linked (Glc) serine). The EGF-like 45; calcium-binding domain maps to 2607–2646 (DVDECDGNHRCQHGCQNILGGYRCGCPQGYVQHYQWNQCV). An EGF-like 46; calcium-binding domain is found at 2647–2687 (DENECSNPGACGSASCYNTLGSYKCACPSGFSFDQFSSACH). O-linked (Glc) serine glycosylation is present at Ser2668. The region spanning 2688 to 2727 (DVNECSSSKNPCSYGCSNTEGGYLCGCPPGYFRVGQGHCV) is the EGF-like 47; calcium-binding domain. The N-linked (GlcNAc...) asparagine glycan is linked to Asn2803.

It belongs to the fibrillin family. In terms of assembly, interacts with BMP2, BMP4, BMP7, BMP10 and GDF5. Interacts with MFAP2 and MFAP5. Interacts with ADAMTSL5. Interacts with MFAP4. Post-translationally, N-glycosylated. In terms of processing, O-glycosylated on serine residues by POGLUT2 and POGLUT3. As to expression, widely expressed.

The protein localises to the secreted. Its subcellular location is the extracellular space. It localises to the extracellular matrix. Functionally, fibrillins are structural components of 10-12 nm extracellular calcium-binding microfibrils, which occur either in association with elastin or in elastin-free bundles. Fibrillin-2-containing microfibrils regulate the early process of elastic fiber assembly. Regulates osteoblast maturation by controlling TGF-beta bioavailability and calibrating TGF-beta and BMP levels, respectively. Hormone secreted by trophoblasts that promotes trophoblast invasiveness. Has glucogenic activity: is able to increase plasma glucose levels. The protein is Fibrillin-2 of Mus musculus (Mouse).